A 362-amino-acid chain; its full sequence is Phosphoserine aminotransferase (362 aa).

S9 and R42 together coordinate L-glutamate. Pyridoxal 5'-phosphate contacts are provided by residues 76 to 77 (GR), W102, T153, D174, and Q197. K198 is subject to N6-(pyridoxal phosphate)lysine. 239 to 240 (NT) contacts pyridoxal 5'-phosphate.

It belongs to the class-V pyridoxal-phosphate-dependent aminotransferase family. SerC subfamily. In terms of assembly, homodimer. It depends on pyridoxal 5'-phosphate as a cofactor.

It is found in the cytoplasm. The catalysed reaction is O-phospho-L-serine + 2-oxoglutarate = 3-phosphooxypyruvate + L-glutamate. It catalyses the reaction 4-(phosphooxy)-L-threonine + 2-oxoglutarate = (R)-3-hydroxy-2-oxo-4-phosphooxybutanoate + L-glutamate. Its pathway is amino-acid biosynthesis; L-serine biosynthesis; L-serine from 3-phospho-D-glycerate: step 2/3. It participates in cofactor biosynthesis; pyridoxine 5'-phosphate biosynthesis; pyridoxine 5'-phosphate from D-erythrose 4-phosphate: step 3/5. Its function is as follows. Catalyzes the reversible conversion of 3-phosphohydroxypyruvate to phosphoserine and of 3-hydroxy-2-oxo-4-phosphonooxybutanoate to phosphohydroxythreonine. The chain is Phosphoserine aminotransferase from Shigella boydii serotype 4 (strain Sb227).